Here is a 113-residue protein sequence, read N- to C-terminus: Large ribosomal subunit protein uL22 (113 aa).

The protein belongs to the universal ribosomal protein uL22 family. In terms of assembly, part of the 50S ribosomal subunit.

This protein binds specifically to 23S rRNA; its binding is stimulated by other ribosomal proteins, e.g. L4, L17, and L20. It is important during the early stages of 50S assembly. It makes multiple contacts with different domains of the 23S rRNA in the assembled 50S subunit and ribosome. In terms of biological role, the globular domain of the protein is located near the polypeptide exit tunnel on the outside of the subunit, while an extended beta-hairpin is found that lines the wall of the exit tunnel in the center of the 70S ribosome. This chain is Large ribosomal subunit protein uL22, found in Bacillus pumilus (strain SAFR-032).